A 197-amino-acid chain; its full sequence is Thymidine kinase (197 aa).

ATP is bound by residues 15-22 (GPMFAGKT) and 93-96 (DEVQ). Residue glutamate 94 is the Proton acceptor of the active site. Positions 150, 153, 188, and 191 each coordinate Zn(2+).

Belongs to the thymidine kinase family. As to quaternary structure, homotetramer.

Its subcellular location is the cytoplasm. The catalysed reaction is thymidine + ATP = dTMP + ADP + H(+). The chain is Thymidine kinase from Thermococcus kodakarensis (strain ATCC BAA-918 / JCM 12380 / KOD1) (Pyrococcus kodakaraensis (strain KOD1)).